Reading from the N-terminus, the 491-residue chain is MKNQDQALIFEVSKEGRIGYSLPKLDVEEVKLEDVFESDYIRVEDAELPEVSELDIMRHYTALSNRNHGVDSGFYPLGSCTMKYNPKINESVARFAGFANIHPLQDEKTVQGAMELMYDLQEHLIEITGMDTVTLQPAAGAHGEWTGLMLIRAYHEANGDFNRTKVIVPDSAHGTNPASATVAGFETITVKSNEHGLVDLEDLKRVVNEETAALMLTNPNTLGLFEENILEMAEIVHNAGGKLYYDGANLNAVLSQARPGDMGFDVVHLNLHKTFTGPHGGGGPGSGPVGVKADLIPYLPKPILEKTENGYHFNYDRPEAIGRVKPFYGNFGINVRAYTYIRSMGPDGLRAVTEYAVLNANYMMRRLAPFYDLPFDRHCKHEFVLSGRRQKKLGVRTLDIAKRLLDFGYHPPTIYFPLNVEECIMIEPTETESKETLDGFIDKMIQIAKEVEENPEVVQEAPHTTVIKRLDETMAARKPVLRYEKPAPVQV.

Lys-273 bears the N6-(pyridoxal phosphate)lysine mark.

Belongs to the GcvP family. C-terminal subunit subfamily. In terms of assembly, the glycine cleavage system is composed of four proteins: P, T, L and H. In this organism, the P 'protein' is a heterodimer of two subunits. Pyridoxal 5'-phosphate serves as cofactor.

It carries out the reaction N(6)-[(R)-lipoyl]-L-lysyl-[glycine-cleavage complex H protein] + glycine + H(+) = N(6)-[(R)-S(8)-aminomethyldihydrolipoyl]-L-lysyl-[glycine-cleavage complex H protein] + CO2. Its function is as follows. The glycine cleavage system catalyzes the degradation of glycine. The P protein binds the alpha-amino group of glycine through its pyridoxal phosphate cofactor; CO(2) is released and the remaining methylamine moiety is then transferred to the lipoamide cofactor of the H protein. The sequence is that of Probable glycine dehydrogenase (decarboxylating) subunit 2 from Bacillus cereus (strain AH187).